The sequence spans 367 residues: Glutamate 5-kinase (367 aa).

Lys8 provides a ligand contact to ATP. The substrate site is built by Ser49, Asp136, and Asn148. Residues 168–169 and 210–216 each bind ATP; these read TD and TGGMVTK. Positions 275–353 constitute a PUA domain; that stretch reads AGKLYLDEGA…REISTILGYA (79 aa).

The protein belongs to the glutamate 5-kinase family.

The protein resides in the cytoplasm. The enzyme catalyses L-glutamate + ATP = L-glutamyl 5-phosphate + ADP. The protein operates within amino-acid biosynthesis; L-proline biosynthesis; L-glutamate 5-semialdehyde from L-glutamate: step 1/2. Catalyzes the transfer of a phosphate group to glutamate to form L-glutamate 5-phosphate. This Nostoc punctiforme (strain ATCC 29133 / PCC 73102) protein is Glutamate 5-kinase.